The following is a 448-amino-acid chain: MKVRIRGIFATALTKLALDWGFSIVQPTGKIVERFDLPVDNSPPDVTVIDHESKSGVVVLGKCGAVEAFVERLREAVDPVVVKADLGVHDVFVGKVVGEGRVEGPGGIVLRVPPRFAPTVGSVGVFTVVRPPLGPVEGVAVPDIIVEGDYVELSTSPGVRFSRHIPEGERVRLRLLAETRLGWLGGLGVRFKSSARFAEDEAVVREAEALYRELVELAKGGEAGAVLRRGRCLALALFDKAAKERLDEVRRSVVPTARGHHALRAQGLGKCLDLLDYLGVEAYERAAEFLARGAVEIWHIKPWGEMVKMRGEAVGVFGDWLVVKRPLRPGGVLDGIGVKIERGFYALTCVPRRGNYVVHTYYTPEGRAVGTYINVNSEPEWGRRIIYIDLLVDVAYVGGEAKVLDLEEYRRYEDVFPARLRPPSGVLSPPVACGERGIIEAPPQSASS.

This sequence belongs to the FAU-1 family.

Functionally, probable RNase involved in rRNA stability through maturation and/or degradation of precursor rRNAs. Binds to RNA in loop regions with AU-rich sequences. The sequence is that of Probable ribonuclease FAU-1 from Pyrobaculum calidifontis (strain DSM 21063 / JCM 11548 / VA1).